The primary structure comprises 282 residues: Putative hydrolase BceJ2315_61450 (282 aa).

Positions 124, 126, and 155 each coordinate Mg(2+).

It belongs to the FAH family. Mg(2+) serves as cofactor.

The polypeptide is Putative hydrolase BceJ2315_61450 (Burkholderia cenocepacia (strain ATCC BAA-245 / DSM 16553 / LMG 16656 / NCTC 13227 / J2315 / CF5610) (Burkholderia cepacia (strain J2315))).